Consider the following 608-residue polypeptide: MASLQQGEKQLFEKFWKGTFKAVATPRPESIIVASITARKPMPRTEPQSSLLLPDQDGPSEKLGQHLAPEALGTNSWGREKACRELDPARAHSASQDRDPTPPPSSRGKKKKKKSTRKKRRRSPSYSPSPVKKKKKKSSKKHKRHRSFSKKRRHSSCSPKSKRREEKRHKKQSRSRKSHRHRHHRCPSRSQSSELRSPSCESRHRGRSPEEGRKSRRTHSRRCSKNHCKVSPDARSSHLPSQPLPRLGFLSARGVITGSGSAADLFSKSASPLAATRGRSQEYDSGNDTSSPPSTQTSSARSRGQEKGSPGGDLSKSRDLNCGNTSDSGNSFTTSSPQNKGAVLETVSPACRSRESRGFQSPCLQCAEVKKSSLVPSTARSSPIKECSRSSSYTSTRSSSPSSRSPNPRASPRYTRSRSTSSEKRSYSRSPSYSSKSGKRSPPSRSSRSRRSPSYSRYSPSRERDLKYGEKEPQPRERARRRRRSYSPMRKRRRDSPSHLEARRITSARKRPIPYYRPSPSSSSSLSSASSWYSSSSSSSSSSSRSPSRSYSRSRSPSRSHSSRSQTRSRTRTSRSSSSRSLSLGSRSRSRNRSLSYSSAESYASTRR.

2 disordered regions span residues 34 to 246 (ASIT…PLPR) and 261 to 608 (SAAD…STRR). Basic and acidic residues predominate over residues 78-100 (GREKACRELDPARAHSASQDRDP). Composition is skewed to basic residues over residues 107–123 (RGKK…RRRS) and 131–187 (VKKK…HRCP). The span at 188–200 (SRSQSSELRSPSC) shows a compositional bias: low complexity. Residues 201-213 (ESRHRGRSPEEGR) show a composition bias toward basic and acidic residues. Residues 214-228 (KSRRTHSRRCSKNHC) are compositionally biased toward basic residues. Positions 289–299 (TSSPPSTQTSS) are enriched in low complexity. The span at 322–339 (CGNTSDSGNSFTTSSPQN) shows a compositional bias: polar residues. 2 stretches are compositionally biased toward low complexity: residues 389-420 (RSSS…SRST) and 428-459 (SRSP…SRYS). Over residues 460 to 477 (PSRERDLKYGEKEPQPRE) the composition is skewed to basic and acidic residues. Residues 478 to 494 (RARRRRRSYSPMRKRRR) are compositionally biased toward basic residues. Basic and acidic residues predominate over residues 495 to 504 (DSPSHLEARR). Positions 518–555 (PSPSSSSSLSSASSWYSSSSSSSSSSSRSPSRSYSRSR) are enriched in low complexity. The segment covering 556-573 (SPSRSHSSRSQTRSRTRT) has biased composition (basic residues). Positions 574–608 (SRSSSSRSLSLGSRSRSRNRSLSYSSAESYASTRR) are enriched in low complexity.

This sequence belongs to the nSR100 family. Phosphorylated. In terms of tissue distribution, specifically expressed in neuronal cells (at protein level). Expressed in adult nervous system and sensory organ tissues.

It localises to the nucleus. Splicing factor specifically required for neural cell differentiation. Acts in conjunction with nPTB/PTBP2 by binding directly to its regulated target transcripts and promotes neural-specific exon inclusion in many genes that function in neural cell differentiation. Required to promote the inclusion of neural-specific exon 10 in nPTB/PTBP2, leading to increased expression of neural-specific nPTB/PTBP2. Also promotes the inclusion of exon 16 in DAAM1 in neuron extracts. Promotes alternative splicing of REST transcripts to produce REST isoform 2 (REST4) with greatly reduced repressive activity, thereby activating expression of REST targets in neural cells. Plays an important role during embryonic development as well as in the proper functioning of the adult nervous system. Regulates alternative splicing events in genes with important neuronal functions. The sequence is that of Serine/arginine repetitive matrix protein 4 (Srrm4) from Mus musculus (Mouse).